Reading from the N-terminus, the 657-residue chain is ABC1 family protein YPL109C, mitochondrial (657 aa).

A mitochondrion-targeting transit peptide spans 1 to 15; sequence MSFLKFAYRNSWRYY.

Belongs to the protein kinase superfamily. ADCK protein kinase family.

It localises to the mitochondrion. The sequence is that of ABC1 family protein YPL109C, mitochondrial from Saccharomyces cerevisiae (strain ATCC 204508 / S288c) (Baker's yeast).